The sequence spans 101 residues: Aspartyl/glutamyl-tRNA(Asn/Gln) amidotransferase subunit C (101 aa).

This sequence belongs to the GatC family. In terms of assembly, heterotrimer of A, B and C subunits.

The catalysed reaction is L-glutamyl-tRNA(Gln) + L-glutamine + ATP + H2O = L-glutaminyl-tRNA(Gln) + L-glutamate + ADP + phosphate + H(+). It catalyses the reaction L-aspartyl-tRNA(Asn) + L-glutamine + ATP + H2O = L-asparaginyl-tRNA(Asn) + L-glutamate + ADP + phosphate + 2 H(+). Functionally, allows the formation of correctly charged Asn-tRNA(Asn) or Gln-tRNA(Gln) through the transamidation of misacylated Asp-tRNA(Asn) or Glu-tRNA(Gln) in organisms which lack either or both of asparaginyl-tRNA or glutaminyl-tRNA synthetases. The reaction takes place in the presence of glutamine and ATP through an activated phospho-Asp-tRNA(Asn) or phospho-Glu-tRNA(Gln). The chain is Aspartyl/glutamyl-tRNA(Asn/Gln) amidotransferase subunit C from Lactobacillus delbrueckii subsp. bulgaricus (strain ATCC 11842 / DSM 20081 / BCRC 10696 / JCM 1002 / NBRC 13953 / NCIMB 11778 / NCTC 12712 / WDCM 00102 / Lb 14).